Reading from the N-terminus, the 1642-residue chain is MATDGASCEPDFSRAPEDAAGAPAEAAKKEFDVDTLSKSELRMLLSVMEGELEARDLVIEALRARRKEVFIQERYGRFNLNDPFLALQRDYEAGASDKEKKPVCTNPLSILEAVMAHCRKMQERMSTQLAAAESRQKKLEMEKLQLQALEQEHKKLAARLEEERGKNKHVVLMLVKECKQLSGKVLEEAQKLEEVMAKLEEEKKKTSALEEELATEKRRSTEMEAQMEKQLSEFDTEREQLRAKLHREEAHTADLKEEIDKMKKMIEQLKRGTDSKPGLSLPRKTKDRRSISISVATEGPMTRSVACQTDLVMESAEPVKKLPLTVPVKPAAGSPPVAAGAKGNACASAAAVRPGVERQVSHGDLIGASLPAAPPPSANRIEENGPSTGSTADLTSSPTPVPSTVSPASGHTPAPPPHSLHSPCANAPLHPGLNPRIQAARFRFQGSNANDPDQNGNTTQSPPSRDVSPTSRDNLVAKQLARNTVTQALSRFTSPPAGAPPRPGAPPTGDVGTYPPVGRTSLKTPGGARVDRGNPPPIPPKKPGLSQTPSPPHPQLKVIMDSSRASSTGIKADNKTVASPPSTLPQGSRVMNEENLSKSSSPQLPPKPSIDLTVAPAGCAVSALATSQVGAWPAETPGLNQSACSERSLVIPTTTASSSSIHPVNASSRRAGASDSLLVTASGWSPSLTPLLMSGGPAPLAGRPTLLQQAAAQGNVTLLSMLLNEEGLDINYSCEDGHSALYSAAKNGHTDCVRLLLNAEAQVNVADTNGFTPLCAAAAQGHFKCVELLIAYDANINHAADGGQTPLYLACKNGNKECIKLLLEAGTDRSVKTRDGWTPIHAAVDTGNVDSLKLLMYHRAPAHGNKLREEPGLAIFDLDQEEERHEGTSKPVVPADLINHADSEGWTAAHIAASKGFKNCLEVLCRHGGLEPERRDKCNRTAHDVATDDCKHLLENLNALKIPLRISVGEIEPGNYGADDFECENTICALNIRKQTSWDDFSKAVSQALTNHFQAISSDGWWSLEDMTFNSTTDSSIGLSASSVRSITLGTVPWSAGQSFAQSPWDFVRTNKAEQVTVLLSGPQEGCLSSVTYASMIPLQMLQNYLRLVEQYHNVIFHGPEGSLQDYIAHQLALCLKHRQMAAGFPCEIVRAEVDADFSKEQLVDLFISNACLIPVKQSPANKKIIVILENLEKSSLSELLGDFLGPLENHSTESPCTFQKGNGTSECYYFHENCFLMGTIAKACLQGSDLLVQQHFRWVQLRWDGEPMQGLLRRFLRRKVVNKFRGQVPSPCDPVCKTVDWALAVWRQLNSCLARLGTPEALLGPKYFLSCPVIPGHAQATVKWMSKLWNAVIAPRVQEAILSRASVKRQPGLGQTTKNPSQGQQAVVRAALSILLNKAVLHGCPLQRAELDQHTADFKGGSFPLSIVSSYGSCNKKKESGAWRKVSTSPRKKSGRFSSPTWNKPDLSEEGIKSNTILQLNCNRNASLSNQKSLENDLSLTLDLDQRLSLGSDDEADLVKELQSMCASKSESDISKIADSRDDLRRFDSSGNNPVFSATVNNPRMPVSQKEVSPLSSHQTTECSNSKSKTELGVSRVKSFLPVPRSKATQCSQNTKRSSSSSNTRQIEINNNSRDLEPTQK.

Disordered regions lie at residues 1-27, 203-222, 366-433, 446-471, and 491-611; these read MATDGASCEPDFSRAPEDAAGAPAEAA, KKKTSALEEELATEKRRSTE, IGAS…HPGL, GSNANDPDQNGNTTQSPPSRDVSPTS, and RFTS…PSID. Residues 119 to 276 adopt a coiled-coil conformation; it reads RKMQERMSTQ…EQLKRGTDSK (158 aa). A compositionally biased stretch (polar residues) spans 385–394; sequence GPSTGSTADL. The segment covering 395 to 407 has biased composition (low complexity); that stretch reads TSSPTPVPSTVSP. Residue R491 is modified to Asymmetric dimethylarginine. Residues 497–506 show a composition bias toward pro residues; the sequence is AGAPPRPGAP. Polar residues predominate over residues 576–586; the sequence is TVASPPSTLPQ. ANK repeat units follow at residues 702 to 732, 736 to 765, 769 to 798, 802 to 831, 835 to 864, and 904 to 934; these read GRPTLLQQAAAQGNVTLLSMLLNEEGLDINY, DGHSALYSAAKNGHTDCVRLLLNAEAQVNV, NGFTPLCAAAAQGHFKCVELLIAYDANINH, GGQTPLYLACKNGNKECIKLLLEAGTDRSV, DGWTPIHAAVDTGNVDSLKLLMYHRAPAHG, and EGWTAAHIAASKGFKNCLEVLCRHGGLEPER. Residues 1440-1469 are disordered; sequence ESGAWRKVSTSPRKKSGRFSSPTWNKPDLS. S1513 carries the post-translational modification Phosphoserine. Residues 1546-1642 are disordered; that stretch reads RRFDSSGNNP…NSRDLEPTQK (97 aa). Polar residues-rich tracts occupy residues 1552–1563 and 1571–1588; these read GNNPVFSATVNN and KEVSPLSSHQTTECSNSK. The span at 1613-1627 shows a compositional bias: low complexity; it reads SQNTKRSSSSSNTRQ.

In terms of assembly, interacts with CTTN/cortactin SH3 domain. Interacts with STRN, STRN4/zinedin and MOB4/phocein; this interactions mediate the association with the STRIPAK core complex and may regulate dendritic spine distribution of the STRIPAK complex in hippocampal neurons. Activation of glutamate receptors weakens the interaction with STRN and STRN4.

The protein resides in the cytoplasm. It localises to the cell cortex. It is found in the cell projection. The protein localises to the dendritic spine. In terms of biological role, regulates the dendritic spine distribution of CTTN/cortactin in hippocampal neurons, and thus controls dendritic spinogenesis and dendritic spine maintenance. Associates with the striatin-interacting phosphatase and kinase (STRIPAK) core complex to regulate dendritic spine distribution of the STRIPAK complex in hippocampal neurons. This Muntiacus reevesi (Reeves' muntjac) protein is Cortactin-binding protein 2 (CTTNBP2).